The chain runs to 314 residues: GTP cyclohydrolase FolE2 (314 aa).

A disordered region spans residues 290–314 (DASAWSAPQAAAPDQQESFATGNER). Residues 291–304 (ASAWSAPQAAAPDQ) show a composition bias toward low complexity. A compositionally biased stretch (polar residues) spans 305 to 314 (QESFATGNER).

Belongs to the GTP cyclohydrolase IV family.

It catalyses the reaction GTP + H2O = 7,8-dihydroneopterin 3'-triphosphate + formate + H(+). It participates in cofactor biosynthesis; 7,8-dihydroneopterin triphosphate biosynthesis; 7,8-dihydroneopterin triphosphate from GTP: step 1/1. Converts GTP to 7,8-dihydroneopterin triphosphate. The protein is GTP cyclohydrolase FolE2 of Pseudomonas putida (strain ATCC 47054 / DSM 6125 / CFBP 8728 / NCIMB 11950 / KT2440).